The following is a 266-amino-acid chain: UPF0246 protein Pcryo_0542 (266 aa).

Belongs to the UPF0246 family.

This Psychrobacter cryohalolentis (strain ATCC BAA-1226 / DSM 17306 / VKM B-2378 / K5) protein is UPF0246 protein Pcryo_0542.